Reading from the N-terminus, the 158-residue chain is Non-secretory ribonuclease (158 aa).

The first 27 residues, 1–27 (MVPKLFTSQICLLLLLGLSSLEVSLHA), serve as a signal peptide directing secretion. The C-linked (Man) tryptophan glycan is linked to Trp34. His42 serves as the catalytic Proton acceptor. Position 60 is a 3'-nitrotyrosine (Tyr60). Substrate is bound at residue 65-69 (KNRNT). Asn86, Asn92, and Asn111 each carry an N-linked (GlcNAc...) asparagine glycan. His153 functions as the Proton donor in the catalytic mechanism.

The protein belongs to the pancreatic ribonuclease family. As to quaternary structure, interacts with and forms a tight 1:1 complex with RNH1. Dimerization of two such complexes may occur.

It localises to the lysosome. Its subcellular location is the cytoplasmic granule. It catalyses the reaction an [RNA] containing cytidine + H2O = an [RNA]-3'-cytidine-3'-phosphate + a 5'-hydroxy-ribonucleotide-3'-[RNA].. It carries out the reaction an [RNA] containing uridine + H2O = an [RNA]-3'-uridine-3'-phosphate + a 5'-hydroxy-ribonucleotide-3'-[RNA].. Functionally, this is a non-secretory ribonuclease. It is a pyrimidine specific nuclease with a slight preference for U. Cytotoxin and helminthotoxin. Possesses a wide variety of biological activities. The protein is Non-secretory ribonuclease (RNASE2) of Saguinus labiatus (Red-chested mustached tamarin).